Reading from the N-terminus, the 135-residue chain is DNA-directed RNA polymerase subunit omega (135 aa).

Residues 107 to 135 are disordered; it reads ASQESQDYEVDGEIDDEINDQDGDEEVSV. Acidic residues predominate over residues 112-135; sequence QDYEVDGEIDDEINDQDGDEEVSV.

The protein belongs to the RNA polymerase subunit omega family. As to quaternary structure, the RNAP catalytic core consists of 2 alpha, 1 beta, 1 beta' and 1 omega subunit. When a sigma factor is associated with the core the holoenzyme is formed, which can initiate transcription.

The catalysed reaction is RNA(n) + a ribonucleoside 5'-triphosphate = RNA(n+1) + diphosphate. In terms of biological role, promotes RNA polymerase assembly. Latches the N- and C-terminal regions of the beta' subunit thereby facilitating its interaction with the beta and alpha subunits. In Wolbachia pipientis wMel, this protein is DNA-directed RNA polymerase subunit omega.